A 167-amino-acid polypeptide reads, in one-letter code: UPF0114 protein in repA1-repA2 intergenic region (167 aa).

3 helical membrane-spanning segments follow: residues 15–35 (LMFPVYVGLSFGFILLTLKFF), 53–73 (LVLVVLSLIDIALVGGLLVMV), and 136–156 (IMLCVIIHLTFVLSAFGMAYI).

This sequence belongs to the UPF0114 family.

It localises to the cell membrane. The polypeptide is UPF0114 protein in repA1-repA2 intergenic region (Buchnera aphidicola subsp. Diuraphis noxia).